The following is a 420-amino-acid chain: 2,3-dimethylmalate dehydratase large subunit (420 aa).

[4Fe-4S] cluster is bound by residues Cys301, Cys361, and Cys364.

The protein belongs to the aconitase/IPM isomerase family. LeuC type 2 subfamily. Heterodimer of a large and a small subunit. Requires [4Fe-4S] cluster as cofactor.

The enzyme catalyses (2R,3S)-2,3-dimethylmalate = dimethylmaleate + H2O. The protein operates within cofactor degradation; nicotinate degradation; propanoate and pyruvate from 6-hydroxynicotinate: step 7/8. The protein is 2,3-dimethylmalate dehydratase large subunit (dmdA) of Eubacterium barkeri (Clostridium barkeri).